We begin with the raw amino-acid sequence, 251 residues long: Triosephosphate isomerase (251 aa).

Residue 9–11 (NWK) coordinates substrate. The Electrophile role is filled by histidine 95. Residue glutamate 167 is the Proton acceptor of the active site. Residues glycine 173, serine 213, and 234-235 (GG) contribute to the substrate site. The residue at position 213 (serine 213) is a Phosphoserine.

The protein belongs to the triosephosphate isomerase family. In terms of assembly, homodimer.

It is found in the cytoplasm. The enzyme catalyses D-glyceraldehyde 3-phosphate = dihydroxyacetone phosphate. Its pathway is carbohydrate biosynthesis; gluconeogenesis. It functions in the pathway carbohydrate degradation; glycolysis; D-glyceraldehyde 3-phosphate from glycerone phosphate: step 1/1. Involved in the gluconeogenesis. Catalyzes stereospecifically the conversion of dihydroxyacetone phosphate (DHAP) to D-glyceraldehyde-3-phosphate (G3P). The polypeptide is Triosephosphate isomerase (Bacillus cereus (strain AH820)).